Reading from the N-terminus, the 138-residue chain is uncharacterized protein (138 aa).

The chain crosses the membrane as a helical span at residues 19–40; it reads ECKVSVISFFLLAFLLMAHIWL. A run of 3 repeats spans residues 94–106, 107–119, and 120–132. A 3 X 13 AA tandem repeats of K-G-E-I-E-G-K-E-E-K-K-E-[GV] region spans residues 94–132; sequence KGEIEGKEEKKEGKGEIEGKEEKKEGKGEIEGKEEKKEV. Positions 98 to 138 are disordered; sequence EGKEEKKEGKGEIEGKEEKKEGKGEIEGKEEKKEVENGPRK.

Expressed in roots, leaves and flowers.

Its subcellular location is the mitochondrion membrane. Its function is as follows. Involved in cytoplasmic male sterility (CMS) by leading to pollen abortion. Not expressed in fertile (normal) plants. This is an uncharacterized protein from Raphanus sativus (Radish).